The chain runs to 373 residues: NAD(P)H-quinone oxidoreductase subunit 1 (373 aa).

Helical transmembrane passes span 28 to 48, 98 to 118, 129 to 149, 177 to 197, 205 to 225, 267 to 287, 309 to 329, and 348 to 368; these read LLWL…GVLV, LLFT…WLII, VGVG…GLLM, LALA…VDIV, ILSW…ICAL, VLSA…PIPV, TVGI…AILL, and FLLP…LAFP.

This sequence belongs to the complex I subunit 1 family. In terms of assembly, NDH-1 is composed of at least 11 different subunits.

It localises to the cellular thylakoid membrane. The enzyme catalyses a plastoquinone + NADH + (n+1) H(+)(in) = a plastoquinol + NAD(+) + n H(+)(out). The catalysed reaction is a plastoquinone + NADPH + (n+1) H(+)(in) = a plastoquinol + NADP(+) + n H(+)(out). NDH-1 shuttles electrons from an unknown electron donor, via FMN and iron-sulfur (Fe-S) centers, to quinones in the respiratory and/or the photosynthetic chain. The immediate electron acceptor for the enzyme in this species is believed to be plastoquinone. Couples the redox reaction to proton translocation, and thus conserves the redox energy in a proton gradient. In Synechococcus sp. (strain CC9605), this protein is NAD(P)H-quinone oxidoreductase subunit 1.